A 1014-amino-acid polypeptide reads, in one-letter code: MALYFVYLSTLLALILLGDNWAAGTYASRYTQHVDENQSGAAAQSGSKVTSRHRNWCAYVVTRTVSCVMEDGVETYVKPEYQRCAWGQCSHVVLYRTYRKPRYKVAYKVVSEMEWKCCHGYSGDDCSDGSSAIHDSRARPTGEEGRSDSDRIRQLEEQIQSLNKNLHNLQKKIYEESQREGISGGNNLADAAQPGMKETIHSIQTKLDMLDNMTRVHDKTLTNINNHLVGGNGIENELDSRYGTLKEEILRELERRVTLSCSSCQTGVESIQRQHQEDRERIRELEKHISVMEQHHQQTLDLLSRSQSCCDSLDRKLSAIDRKVSSTAETYDILRGRLEKELRSNGNGGRGKAMEEKLNNRLRDLERRLNGTVRKTEQKCSHTETSMKEFVQREIGQIKNSVLGRNDDHGYRISTVEIDIQDLKRFINDHKNNLERLGNKTNDLDSGLKSAIHLCTETCAAKGSETEDTVKSLEWKVVANEEDIKKFDTKLKDISVSGDSLLDRVIDLSNDVQKIKDLTGQNGEHFNQIVTDVENLGRDCDVCSSIDGELQKIRNVTSYAFDKFQAELTVLGRKVFSDEHVCSQVCSNLQEEVGKLKEEVEKCTGQCMISMADHQRNVDNQNTVTRKLGKDLKSIQGELTGILQIFNSINDTLKGLRNTIQKHGNNITDLNTSKGKIYLELDQLYDDLNKHKVDSKGHFDSISSFNSNLMTEMGECRLSREGLDKRLSKMEDVCGRLDTLSENLKTIKDGLSKHVSGLWTCVNDLNSTVISHSETISRIHNVHLENIQGRMNNLNSSIRNVLKEFQIFTEQDFTGPPGLPGPQGEKGSKGPPGPRGPLGKEGPQGRVGPVGPPGLRGEQGPPGKDANVPRLSFSAALTRPQASSGTIIFNKVFINERKAYNPKTGVFTAPVRGRYFFSAVLTGHKNVKIEAVLSKSNFGIARGDSAGYQPEGLEKPMAEARHTPGSLVIFNIVLPLQEGDTICIDLVTGKLAHSVEPLTIFSGMLLYEESEDRL.

Positions M1–A27 are cleaved as a signal peptide. The EMI domain occupies H53–D128. Intrachain disulfides connect C57–C118, C84–C89, and C117–C126. Disordered stretches follow at residues D125–D150 and Q811–P869. Over residues H134–D150 the composition is skewed to basic and acidic residues. The stretch at G145–R179 forms a coiled coil. One can recognise a Collagen-like domain in the interval G815–D865. Residues K840 to R856 show a composition bias toward low complexity. Positions A866 to D1012 constitute a C1q domain.

The protein resides in the secreted. It is found in the extracellular space. Its subcellular location is the extracellular matrix. May be responsible for anchoring smooth muscle cells to elastic fibers, and may be involved not only in the formation of the elastic fiber, but also in the processes that regulate vessel assembly. Has cell adhesive capacity. The protein is EMILIN-1-A of Danio rerio (Zebrafish).